The following is a 592-amino-acid chain: Polyadenylate-binding protein, cytoplasmic and nuclear (592 aa).

Residues 1–10 (MSDITEKTAE) show a composition bias toward basic and acidic residues. The interval 1–43 (MSDITEKTAEQLENLQINDDQQPAQSASAPSTSASESEASSVS) is disordered. Polar residues predominate over residues 11 to 20 (QLENLQINDD). Over residues 21-43 (QQPAQSASAPSTSASESEASSVS) the composition is skewed to low complexity. 4 RRM domains span residues 50-128 (ASLY…WSER), 138-215 (GNIF…MHVP), 231-308 (TNIY…RAQK), and 334-411 (VNLF…IAQR). Positions 507-586 (NQFPRHQQQH…ALAAYENFKK (80 aa)) constitute a PABC domain.

Belongs to the polyadenylate-binding protein type-1 family.

The protein resides in the cytoplasm. It localises to the nucleus. In terms of biological role, binds the poly(A) tail of mRNA. Appears to be an important mediator of the multiple roles of the poly(A) tail in mRNA biogenesis, stability and translation. In the nucleus, involved in both mRNA cleavage and polyadenylation. Is also required for efficient mRNA export to the cytoplasm. Acts in concert with a poly(A)-specific nuclease (PAN) to affect poly(A) tail shortening, which may occur concomitantly with either nucleocytoplasmic mRNA transport or translational initiation. In the cytoplasm, stimulates translation initiation and regulates mRNA decay through translation termination-coupled poly(A) shortening, probably mediated by PAN. The polypeptide is Polyadenylate-binding protein, cytoplasmic and nuclear (PAB1) (Kluyveromyces lactis (strain ATCC 8585 / CBS 2359 / DSM 70799 / NBRC 1267 / NRRL Y-1140 / WM37) (Yeast)).